A 606-amino-acid chain; its full sequence is DNA primase (606 aa).

The segment at 40 to 64 (CPFHQEKTPSFYVVPEKRFYFCHGC) adopts a CHC2-type zinc-finger fold. One can recognise a Toprim domain in the interval 256 to 349 (KAAVLVEGYF…DPDTFARREG (94 aa)). Residues E262, D307, and D309 each coordinate Mg(2+). Residues 429–451 (VPLPKPAGGDAPPSSPNRPAPPL) form a disordered region. Residues 441-451 (PSSPNRPAPPL) are compositionally biased toward pro residues.

Belongs to the DnaG primase family. In terms of assembly, monomer. Interacts with DnaB. Requires Zn(2+) as cofactor. It depends on Mg(2+) as a cofactor.

It catalyses the reaction ssDNA + n NTP = ssDNA/pppN(pN)n-1 hybrid + (n-1) diphosphate.. Functionally, RNA polymerase that catalyzes the synthesis of short RNA molecules used as primers for DNA polymerase during DNA replication. In Myxococcus xanthus, this protein is DNA primase.